The chain runs to 60 residues: Large ribosomal subunit protein bL32 (60 aa).

Residues 1 to 28 form a disordered region; it reads MAVQQNKKSRSARDMRRSHDALEASTLS. Positions 11 to 22 are enriched in basic and acidic residues; that stretch reads SARDMRRSHDAL.

The protein belongs to the bacterial ribosomal protein bL32 family.

The sequence is that of Large ribosomal subunit protein bL32 from Pseudomonas savastanoi pv. phaseolicola (strain 1448A / Race 6) (Pseudomonas syringae pv. phaseolicola (strain 1448A / Race 6)).